Consider the following 73-residue polypeptide: Large ribosomal subunit protein bL31 (73 aa).

Residues cysteine 16, cysteine 18, cysteine 38, and cysteine 41 each coordinate Zn(2+).

The protein belongs to the bacterial ribosomal protein bL31 family. Type A subfamily. In terms of assembly, part of the 50S ribosomal subunit. Zn(2+) is required as a cofactor.

Functionally, binds the 23S rRNA. The sequence is that of Large ribosomal subunit protein bL31 from Streptomyces avermitilis (strain ATCC 31267 / DSM 46492 / JCM 5070 / NBRC 14893 / NCIMB 12804 / NRRL 8165 / MA-4680).